The following is an 87-amino-acid chain: Acyl-CoA-binding protein (87 aa).

S2 carries the post-translational modification N-acetylserine. The ACB domain maps to 2 to 87 (SQAEFDKAAE…VEELKKKYGI (86 aa)). K8 carries the N6-acetyllysine; alternate modification. K8 bears the N6-succinyllysine; alternate mark. K14 contacts an acyl-CoA. Residue K17 is modified to N6-succinyllysine. K19 is subject to N6-acetyllysine. Y29 is modified (phosphotyrosine). Residues 29–33 (YSHYK), K51, K55, and Y74 contribute to the an acyl-CoA site. An N6-acetyllysine modification is found at K51. N6-acetyllysine; alternate is present on K55. K55 carries the N6-succinyllysine; alternate modification. K55 is modified (N6-(2-hydroxyisobutyryl)lysine; alternate). Position 55 is an N6-malonyllysine; alternate (K55). Position 77 is an N6-acetyllysine; alternate (K77). Position 77 is an N6-succinyllysine; alternate (K77).

This sequence belongs to the ACBP family. In terms of assembly, monomer.

The protein resides in the endoplasmic reticulum. It is found in the golgi apparatus. In terms of biological role, binds medium- and long-chain acyl-CoA esters with very high affinity and may function as an intracellular carrier of acyl-CoA esters. It is also able to displace diazepam from the benzodiazepine (BZD) recognition site located on the GABA type A receptor. It is therefore possible that this protein also acts as a neuropeptide to modulate the action of the GABA receptor. This is Acyl-CoA-binding protein (DBI) from Bos taurus (Bovine).